The primary structure comprises 333 residues: Dehydrodolichyl diphosphate synthase complex subunit Dhdds (333 aa).

Positions 34, 35, 37, 38, and 85 each coordinate (2E,6E)-farnesyl diphosphate. Residue aspartate 34 participates in Mg(2+) binding. Isopentenyl diphosphate-binding residues include arginine 38, arginine 85, arginine 205, arginine 211, and serine 213.

Belongs to the UPP synthase family. The active dehydrodolichyl diphosphate synthase complex is a heterotetramer composed of a dimer of heterodimer of DHDDS and NUS1. Interacts with NPC2. Mg(2+) serves as cofactor.

The protein localises to the endoplasmic reticulum membrane. It catalyses the reaction n isopentenyl diphosphate + (2E,6E)-farnesyl diphosphate = a di-trans,poly-cis-polyprenyl diphosphate + n diphosphate. The protein operates within protein modification; protein glycosylation. It functions in the pathway lipid metabolism. In terms of biological role, with NUS1, forms the dehydrodolichyl diphosphate synthase (DDS) complex, an essential component of the dolichol monophosphate (Dol-P) biosynthetic machinery. Both subunits contribute to enzymatic activity, i.e. condensation of multiple copies of isopentenyl pyrophosphate (IPP) to farnesyl pyrophosphate (FPP) to produce dehydrodolichyl diphosphate (Dedol-PP), a precursor of dolichol phosphate which is utilized as a sugar carrier in protein glycosylation in the endoplasmic reticulum (ER). Synthesizes long-chain polyprenols, mostly of C95 and C100 chain length. Regulates the glycosylation and stability of nascent NPC2, thereby promoting trafficking of LDL-derived cholesterol. The protein is Dehydrodolichyl diphosphate synthase complex subunit Dhdds of Mus musculus (Mouse).